A 576-amino-acid polypeptide reads, in one-letter code: MENMKVLLGFICLIVPLLSLETDKCTEYPNEVISFSSVNEIDIRSCPLTPNEMHGGTIIWYKNDSKTPISADKDSRIHQQNEHLWFVPAKMEDSGYYYCIMRNSTYCLKTKITMSVLENDPGLCYNTQASFIQRLHVAGDGSLVCPYLDFFKDENNELPKVQWYKNCKPLPLDDGNFFGFKNKLMVMNVAEEHRGNYTCRTSYTYQGKQYPVTRVITFITIDDSKRDRPVIMSPRNETMEADPGSTIQLICNVTGQFTDLVYWKWNGSEIEWDDPILAEDYQFLEHPSAKRKYTLITTLNVSEVKSQFYRYPFICFVKNTHILETAHVRLVYPVPDFKNYLIGGFAIFTATAVFCACIYKVFKVDIVLWYRDSCSDFLPRKASDGRTYDAYVLYPKTYGEGSFAYLDTFVFKLLPEVLEGQFGYKLFICGRDDYVGEDTIEVTNENVKRSRRLIIILVRDMGSFSCLGQSSEEQIAIYDALIREGIKIILLELEKIQDYEKMPESIQFIKQKHGAICWSGDFKERPQSAKTRFWKNLRYQMPAQRRSPLSKHHLLTLDPVLDTKEKLQAETHLPLG.

A signal peptide spans 1 to 19 (MENMKVLLGFICLIVPLLS). Ig-like C2-type domains follow at residues 20-115 (LETD…ITMS), 121-217 (PGLC…RVIT), and 229-331 (PVIM…VRLV). Residues 20-338 (LETDKCTEYP…RLVYPVPDFK (319 aa)) lie on the Extracellular side of the membrane. 3 cysteine pairs are disulfide-bonded: C25–C107, C46–C99, and C145–C199. Residues N63 and N103 are each glycosylated (N-linked (GlcNAc...) asparagine). Residues N236, N252, and N266 are each glycosylated (N-linked (GlcNAc...) asparagine). C251 and C315 are oxidised to a cystine. A helical membrane pass occupies residues 339-359 (NYLIGGFAIFTATAVFCACIY). Residues 360–576 (KVFKVDIVLW…LQAETHLPLG (217 aa)) lie on the Cytoplasmic side of the membrane. The 156-residue stretch at 386–541 (RTYDAYVLYP…RFWKNLRYQM (156 aa)) folds into the TIR domain. The active site involves E473. Residue Y499 is modified to Phosphotyrosine. T556 is modified (phosphothreonine; by PKC).

It belongs to the interleukin-1 receptor family. In terms of assembly, the interleukin-1 receptor complex is a heterodimer of IL1R1 and IL1RAP. Interacts with PIK3R1. Interacts with IL1A. A soluble form (sIL1R1) is probably produced by proteolytic cleavage at the cell surface (shedding). Post-translationally, rapidly phosphorylated on Tyr-499 in response to IL-1, which creates a SH2 binding site for the PI 3-kinase regulatory subunit PIK3R1.

It is found in the membrane. It localises to the cell membrane. The protein localises to the secreted. It carries out the reaction NAD(+) + H2O = ADP-D-ribose + nicotinamide + H(+). Functionally, receptor for IL1A, IL1B and IL1RN. After binding to interleukin-1 associates with the coreceptor IL1RAP to form the high affinity interleukin-1 receptor complex which mediates interleukin-1-dependent activation of NF-kappa-B, MAPK and other pathways. Signaling involves the recruitment of adapter molecules such as TOLLIP, MYD88, and IRAK1 or IRAK2 via the respective TIR domains of the receptor/coreceptor subunits. Binds ligands with comparable affinity and binding of antagonist IL1RN prevents association with IL1RAP to form a signaling complex. Involved in IL1B-mediated costimulation of IFNG production from T-helper 1 (Th1) cells. The polypeptide is Interleukin-1 receptor type 1 (Il1r1) (Rattus norvegicus (Rat)).